Reading from the N-terminus, the 483-residue chain is Isocitrate dehydrogenase [NADP] (483 aa).

T74 contacts NADP(+). D-threo-isocitrate-binding residues include S83, N85, R89, R99, and R121. Residue D232 participates in Mg(2+) binding. Residues 264-270 (HGSAPDI) and N277 each bind NADP(+).

It belongs to the isocitrate and isopropylmalate dehydrogenases family. Homodimer. The cofactor is Mg(2+). Requires Mn(2+) as cofactor.

It catalyses the reaction D-threo-isocitrate + NADP(+) = 2-oxoglutarate + CO2 + NADPH. Functionally, catalyzes the oxidative decarboxylation of isocitrate to 2-oxoglutarate and carbon dioxide with the concomitant reduction of NADP(+). The chain is Isocitrate dehydrogenase [NADP] (icd) from Rickettsia typhi (strain ATCC VR-144 / Wilmington).